Reading from the N-terminus, the 527-residue chain is Catalase (527 aa).

Over residues 1–22 (MADSRDPASDQMKQWKEQRAPQ) the composition is skewed to basic and acidic residues. Positions 1–34 (MADSRDPASDQMKQWKEQRAPQKPDVLTTGGGNP) are disordered. A2 is subject to N-acetylalanine. S9 is subject to Phosphoserine. Position 13 is an N6-succinyllysine (K13). Residues H75 and N148 contribute to the active site. NADP(+)-binding residues include H194, S201, R203, and N213. N6-succinyllysine is present on K221. K233 is subject to N6-acetyllysine. NADP(+) is bound by residues K237, W303, H305, and K306. Position 306 is an N6-acetyllysine; alternate (K306). Residue K306 is modified to N6-succinyllysine; alternate. Position 358 (Y358) interacts with heme. Phosphoserine occurs at positions 417 and 434. N6-acetyllysine; alternate is present on residues K449 and K480. K449 and K480 each carry N6-succinyllysine; alternate. T511 carries the post-translational modification Phosphothreonine. S517 bears the Phosphoserine mark. Position 522 is an N6-succinyllysine (K522). The short motif at 524-527 (KANL) is the Microbody targeting signal; atypical element.

The protein belongs to the catalase family. As to quaternary structure, homotetramer. Interacts (via microbody targeting signal) with PEX5, monomeric form interacts with PEX5, leading to its translocation into peroxisomes. Heme is required as a cofactor. The cofactor is NADP(+). As to expression, expressed in renal proximal tubules (at protein level).

It is found in the peroxisome matrix. The catalysed reaction is 2 H2O2 = O2 + 2 H2O. Functionally, catalyzes the degradation of hydrogen peroxide (H(2)O(2)) generated by peroxisomal oxidases to water and oxygen, thereby protecting cells from the toxic effects of hydrogen peroxide. Promotes growth of cells including T-cells, B-cells, myeloid leukemia cells, melanoma cells, mastocytoma cells and normal and transformed fibroblast cells. The polypeptide is Catalase (Cat) (Rattus norvegicus (Rat)).